Here is a 464-residue protein sequence, read N- to C-terminus: D-inositol 3-phosphate glycosyltransferase (464 aa).

The segment covering 1–20 (MEGAPRRPDRHARSEEERHV) has biased composition (basic and acidic residues). The interval 1 to 44 (MEGAPRRPDRHARSEEERHVSQYASRLGRRSPAAPTRRRMLRKP) is disordered. Histidine 53 is a 1D-myo-inositol 3-phosphate binding site. Residues 59 to 60 (QP) and glycine 67 contribute to the UDP-N-acetyl-alpha-D-glucosamine site. Residues 64 to 69 (DAGGMN), lysine 122, tyrosine 155, threonine 179, and arginine 199 contribute to the 1D-myo-inositol 3-phosphate site. UDP-N-acetyl-alpha-D-glucosamine-binding residues include arginine 274, lysine 279, and valine 340. Residues phenylalanine 349, arginine 350, and alanine 352 each contribute to the Mg(2+) site. UDP-N-acetyl-alpha-D-glucosamine-binding residues include glutamate 362 and glutamate 370. Threonine 376 contributes to the Mg(2+) binding site.

This sequence belongs to the glycosyltransferase group 1 family. MshA subfamily. Homodimer.

The catalysed reaction is 1D-myo-inositol 3-phosphate + UDP-N-acetyl-alpha-D-glucosamine = 1D-myo-inositol 2-acetamido-2-deoxy-alpha-D-glucopyranoside 3-phosphate + UDP + H(+). Functionally, catalyzes the transfer of a N-acetyl-glucosamine moiety to 1D-myo-inositol 3-phosphate to produce 1D-myo-inositol 2-acetamido-2-deoxy-glucopyranoside 3-phosphate in the mycothiol biosynthesis pathway. The polypeptide is D-inositol 3-phosphate glycosyltransferase (Streptomyces avermitilis (strain ATCC 31267 / DSM 46492 / JCM 5070 / NBRC 14893 / NCIMB 12804 / NRRL 8165 / MA-4680)).